A 674-amino-acid chain; its full sequence is tRNA 5-methylaminomethyl-2-thiouridine biosynthesis bifunctional protein MnmC (674 aa).

A tRNA (mnm(5)s(2)U34)-methyltransferase region spans residues 1–248 (MAASSLPSHN…KREMCFGRYA (248 aa)). The tract at residues 276–674 (IGAGLAGATV…AIRHWRSGKR (399 aa)) is FAD-dependent cmnm(5)s(2)U34 oxidoreductase.

The protein in the N-terminal section; belongs to the methyltransferase superfamily. tRNA (mnm(5)s(2)U34)-methyltransferase family. This sequence in the C-terminal section; belongs to the DAO family. Requires FAD as cofactor.

Its subcellular location is the cytoplasm. It catalyses the reaction 5-aminomethyl-2-thiouridine(34) in tRNA + S-adenosyl-L-methionine = 5-methylaminomethyl-2-thiouridine(34) in tRNA + S-adenosyl-L-homocysteine + H(+). Catalyzes the last two steps in the biosynthesis of 5-methylaminomethyl-2-thiouridine (mnm(5)s(2)U) at the wobble position (U34) in tRNA. Catalyzes the FAD-dependent demodification of cmnm(5)s(2)U34 to nm(5)s(2)U34, followed by the transfer of a methyl group from S-adenosyl-L-methionine to nm(5)s(2)U34, to form mnm(5)s(2)U34. This is tRNA 5-methylaminomethyl-2-thiouridine biosynthesis bifunctional protein MnmC from Hydrogenovibrio crunogenus (strain DSM 25203 / XCL-2) (Thiomicrospira crunogena).